Reading from the N-terminus, the 595-residue chain is NAD-dependent protein deacetylase hst4 (595 aa).

A disordered region spans residues 1-106; it reads MAPRKTKPAT…HLDLTPRLGF (106 aa). Positions 9–32 are enriched in low complexity; sequence ATKPAAKPTPASTATTSSCPSPKS. In terms of domain architecture, Deacetylase sirtuin-type spans 109–428; sequence YGDQEPQLNL…SADVERVKNE (320 aa). Residues 134–153 and 222–225 each bind NAD(+); these read GAGI…DGLF and QNID. The active-site Proton acceptor is the His253. Zn(2+) is bound by residues Cys261, Cys264, Cys283, and Cys286. NAD(+) is bound by residues 342 to 344, 373 to 375, and Cys394; these read GTS and NNE. Polar residues predominate over residues 445-473; that stretch reads QAQTGMLTPSSSYDGDVENASTTTLSNPA. The tract at residues 445–595 is disordered; it reads QAQTGMLTPS…IPKGMGKLLD (151 aa). Basic and acidic residues-rich tracts occupy residues 478–492 and 530–543; these read KLTE…DAPK and TPEE…EHKA.

This sequence belongs to the sirtuin family. Class I subfamily. Zn(2+) serves as cofactor.

The protein localises to the nucleus. It carries out the reaction N(6)-acetyl-L-lysyl-[protein] + NAD(+) + H2O = 2''-O-acetyl-ADP-D-ribose + nicotinamide + L-lysyl-[protein]. Functionally, NAD-dependent histone deacetylase, which could function in telomeric silencing, cell cycle progression and chromosome stability. This chain is NAD-dependent protein deacetylase hst4, found in Emericella nidulans (strain FGSC A4 / ATCC 38163 / CBS 112.46 / NRRL 194 / M139) (Aspergillus nidulans).